The primary structure comprises 206 residues: Ribosomal RNA small subunit methyltransferase G (206 aa).

S-adenosyl-L-methionine-binding positions include Gly-73, Leu-78, 124 to 125 (VE), and Arg-139.

The protein belongs to the methyltransferase superfamily. RNA methyltransferase RsmG family.

Its subcellular location is the cytoplasm. It carries out the reaction guanosine(527) in 16S rRNA + S-adenosyl-L-methionine = N(7)-methylguanosine(527) in 16S rRNA + S-adenosyl-L-homocysteine. Functionally, specifically methylates the N7 position of guanine in position 527 of 16S rRNA. The sequence is that of Ribosomal RNA small subunit methyltransferase G from Yersinia pseudotuberculosis serotype O:3 (strain YPIII).